The following is a 372-amino-acid chain: Aminomethyltransferase (372 aa).

This sequence belongs to the GcvT family. In terms of assembly, the glycine cleavage system is composed of four proteins: P, T, L and H.

The enzyme catalyses N(6)-[(R)-S(8)-aminomethyldihydrolipoyl]-L-lysyl-[protein] + (6S)-5,6,7,8-tetrahydrofolate = N(6)-[(R)-dihydrolipoyl]-L-lysyl-[protein] + (6R)-5,10-methylene-5,6,7,8-tetrahydrofolate + NH4(+). The glycine cleavage system catalyzes the degradation of glycine. In Burkholderia orbicola (strain MC0-3), this protein is Aminomethyltransferase.